The following is a 100-amino-acid chain: Urease subunit gamma (100 aa).

Belongs to the urease gamma subunit family. Heterotrimer of UreA (gamma), UreB (beta) and UreC (alpha) subunits. Three heterotrimers associate to form the active enzyme.

It localises to the cytoplasm. The enzyme catalyses urea + 2 H2O + H(+) = hydrogencarbonate + 2 NH4(+). The protein operates within nitrogen metabolism; urea degradation; CO(2) and NH(3) from urea (urease route): step 1/1. The chain is Urease subunit gamma from Paraburkholderia phytofirmans (strain DSM 17436 / LMG 22146 / PsJN) (Burkholderia phytofirmans).